A 393-amino-acid chain; its full sequence is S-adenosylmethionine synthase 2 (393 aa).

Glutamate 9 is a Mg(2+) binding site. An ATP-binding site is contributed by histidine 15. Glutamate 43 contacts K(+). 2 residues coordinate L-methionine: glutamate 56 and glutamine 99. Residues 167 to 169 (DGK), 235 to 238 (SGRF), aspartate 246, 252 to 253 (RK), alanine 269, lysine 273, and lysine 277 contribute to the ATP site. Aspartate 246 serves as a coordination point for L-methionine. Lysine 277 lines the L-methionine pocket.

Belongs to the AdoMet synthase family. In terms of assembly, homotetramer. Mn(2+) serves as cofactor. The cofactor is Mg(2+). It depends on Co(2+) as a cofactor. K(+) is required as a cofactor. Requires NH4(+) as cofactor. Mostly expressed in roots, and, to a lower extent, in hypocotyls and cotyledons.

Its subcellular location is the cytoplasm. The catalysed reaction is L-methionine + ATP + H2O = S-adenosyl-L-methionine + phosphate + diphosphate. Its pathway is amino-acid biosynthesis; S-adenosyl-L-methionine biosynthesis; S-adenosyl-L-methionine from L-methionine: step 1/1. Its activity is regulated as follows. Inhibited by products of SAMS reaction (SAM, Pi, PPi), substrate analogs (cycloleucine and ethionine), and alternative nucleotides (GTP, CTP and ADP). Strongly repressed by PPPi. Functionally, catalyzes the formation of S-adenosylmethionine from methionine and ATP. The reaction comprises two steps that are both catalyzed by the same enzyme: formation of S-adenosylmethionine (AdoMet) and triphosphate, and subsequent hydrolysis of the triphosphate. This Catharanthus roseus (Madagascar periwinkle) protein is S-adenosylmethionine synthase 2 (SAMS2).